A 156-amino-acid chain; its full sequence is Probable chemoreceptor glutamine deamidase CheD (156 aa).

It belongs to the CheD family.

It catalyses the reaction L-glutaminyl-[protein] + H2O = L-glutamyl-[protein] + NH4(+). Functionally, probably deamidates glutamine residues to glutamate on methyl-accepting chemotaxis receptors (MCPs), playing an important role in chemotaxis. This is Probable chemoreceptor glutamine deamidase CheD from Sulfurimonas denitrificans (strain ATCC 33889 / DSM 1251) (Thiomicrospira denitrificans (strain ATCC 33889 / DSM 1251)).